The chain runs to 1969 residues: Myosin-3 (1969 aa).

One can recognise a Myosin N-terminal SH3-like domain in the interval D33–P82. The Myosin motor domain maps to D86 to D791. At K130 the chain carries N6,N6,N6-trimethyllysine. Residue G179–T186 coordinates ATP. Actin-binding regions lie at residues L667 to E689 and K770 to A784. The IQ domain maps to L794–G823. Positions L853 to A1941 form a coiled coil. Disordered stretches follow at residues Q943–V967, D993–K1029, and E1134–Q1153. Basic and acidic residues-rich tracts occupy residues S1001 to K1029 and S1137 to Q1153.

It belongs to the TRAFAC class myosin-kinesin ATPase superfamily. Myosin family. In terms of assembly, muscle myosin is a hexameric protein that consists of 2 heavy chain subunits (MHC), 2 alkali light chain subunits (MLC) and 2 regulatory light chain subunits (MLC-2).

It is found in the cytoplasm. It localises to the myofibril. The protein localises to the sarcomere. Its subcellular location is the a band. Its function is as follows. Essential for muscle contraction. Involved in ovulation likely by regulating the contraction of gonadal myoepithelial sheath cells. The protein is Myosin-3 of Caenorhabditis briggsae.